Reading from the N-terminus, the 264-residue chain is Hydroxyethylthiazole kinase (264 aa).

Residue Met-52 participates in substrate binding. Positions 127 and 173 each coordinate ATP. Gly-200 contributes to the substrate binding site.

The protein belongs to the Thz kinase family. The cofactor is Mg(2+).

The catalysed reaction is 5-(2-hydroxyethyl)-4-methylthiazole + ATP = 4-methyl-5-(2-phosphooxyethyl)-thiazole + ADP + H(+). The protein operates within cofactor biosynthesis; thiamine diphosphate biosynthesis; 4-methyl-5-(2-phosphoethyl)-thiazole from 5-(2-hydroxyethyl)-4-methylthiazole: step 1/1. Functionally, catalyzes the phosphorylation of the hydroxyl group of 4-methyl-5-beta-hydroxyethylthiazole (THZ). The sequence is that of Hydroxyethylthiazole kinase from Pectobacterium atrosepticum (strain SCRI 1043 / ATCC BAA-672) (Erwinia carotovora subsp. atroseptica).